Here is a 72-residue protein sequence, read N- to C-terminus: Translation initiation factor IF-1 (72 aa).

One can recognise an S1-like domain in the interval 1 to 72; the sequence is MSKEDVIEVE…SRGRIVYRFK (72 aa).

The protein belongs to the IF-1 family. As to quaternary structure, component of the 30S ribosomal translation pre-initiation complex which assembles on the 30S ribosome in the order IF-2 and IF-3, IF-1 and N-formylmethionyl-tRNA(fMet); mRNA recruitment can occur at any time during PIC assembly.

Its subcellular location is the cytoplasm. Functionally, one of the essential components for the initiation of protein synthesis. Stabilizes the binding of IF-2 and IF-3 on the 30S subunit to which N-formylmethionyl-tRNA(fMet) subsequently binds. Helps modulate mRNA selection, yielding the 30S pre-initiation complex (PIC). Upon addition of the 50S ribosomal subunit IF-1, IF-2 and IF-3 are released leaving the mature 70S translation initiation complex. The chain is Translation initiation factor IF-1 from Desulfitobacterium hafniense (strain Y51).